The following is a 259-amino-acid chain: Ribosomal RNA small subunit methyltransferase A (259 aa).

The S-adenosyl-L-methionine site is built by Asn-13, Leu-15, Gly-39, Glu-60, Asp-84, and Asn-101.

This sequence belongs to the class I-like SAM-binding methyltransferase superfamily. rRNA adenine N(6)-methyltransferase family. RsmA subfamily.

The protein localises to the cytoplasm. It catalyses the reaction adenosine(1518)/adenosine(1519) in 16S rRNA + 4 S-adenosyl-L-methionine = N(6)-dimethyladenosine(1518)/N(6)-dimethyladenosine(1519) in 16S rRNA + 4 S-adenosyl-L-homocysteine + 4 H(+). Functionally, specifically dimethylates two adjacent adenosines (A1518 and A1519) in the loop of a conserved hairpin near the 3'-end of 16S rRNA in the 30S particle. May play a critical role in biogenesis of 30S subunits. In Mesomycoplasma hyopneumoniae (strain 232) (Mycoplasma hyopneumoniae), this protein is Ribosomal RNA small subunit methyltransferase A.